The primary structure comprises 209 residues: Holliday junction branch migration complex subunit RuvA (209 aa).

A domain I region spans residues Met1 to Gly70. A domain II region spans residues Thr71 to Thr149. The flexible linker stretch occupies residues Thr150–Ala158. Positions Ala158–Gly209 are domain III.

Belongs to the RuvA family. In terms of assembly, homotetramer. Forms an RuvA(8)-RuvB(12)-Holliday junction (HJ) complex. HJ DNA is sandwiched between 2 RuvA tetramers; dsDNA enters through RuvA and exits via RuvB. An RuvB hexamer assembles on each DNA strand where it exits the tetramer. Each RuvB hexamer is contacted by two RuvA subunits (via domain III) on 2 adjacent RuvB subunits; this complex drives branch migration. In the full resolvosome a probable DNA-RuvA(4)-RuvB(12)-RuvC(2) complex forms which resolves the HJ.

The protein resides in the cytoplasm. In terms of biological role, the RuvA-RuvB-RuvC complex processes Holliday junction (HJ) DNA during genetic recombination and DNA repair, while the RuvA-RuvB complex plays an important role in the rescue of blocked DNA replication forks via replication fork reversal (RFR). RuvA specifically binds to HJ cruciform DNA, conferring on it an open structure. The RuvB hexamer acts as an ATP-dependent pump, pulling dsDNA into and through the RuvAB complex. HJ branch migration allows RuvC to scan DNA until it finds its consensus sequence, where it cleaves and resolves the cruciform DNA. The polypeptide is Holliday junction branch migration complex subunit RuvA (Microcystis aeruginosa (strain NIES-843 / IAM M-2473)).